We begin with the raw amino-acid sequence, 291 residues long: Undecaprenyl-diphosphatase (291 aa).

The next 8 helical transmembrane spans lie at 1–21, 48–68, 102–122, 126–146, 162–182, 203–223, 231–251, and 267–287; these read MFII…LTEF, SAFT…AWVF, LHVL…DDFI, LFSV…MIIA, INYF…WPGF, SDFT…LSLL, IADI…GLIA, and FAIY…GFGI.

Belongs to the UppP family.

The protein localises to the cell membrane. The enzyme catalyses di-trans,octa-cis-undecaprenyl diphosphate + H2O = di-trans,octa-cis-undecaprenyl phosphate + phosphate + H(+). In terms of biological role, catalyzes the dephosphorylation of undecaprenyl diphosphate (UPP). Confers resistance to bacitracin. The sequence is that of Undecaprenyl-diphosphatase from Staphylococcus aureus (strain bovine RF122 / ET3-1).